A 216-amino-acid chain; its full sequence is Phosphoenolpyruvate guanylyltransferase (216 aa).

Residues threonine 143, glycine 159, and serine 162 each contribute to the phosphoenolpyruvate site.

It belongs to the CofC family.

It carries out the reaction phosphoenolpyruvate + GTP + H(+) = enolpyruvoyl-2-diphospho-5'-guanosine + diphosphate. It functions in the pathway cofactor biosynthesis; coenzyme F420 biosynthesis. In terms of biological role, guanylyltransferase that catalyzes the activation of phosphoenolpyruvate (PEP) as enolpyruvoyl-2-diphospho-5'-guanosine, via the condensation of PEP with GTP. It is involved in the biosynthesis of coenzyme F420, a hydride carrier cofactor. The chain is Phosphoenolpyruvate guanylyltransferase from Streptomyces scabiei (strain 87.22).